The following is a 64-amino-acid chain: Outer envelope membrane protein 7 (64 aa).

Residues 1-11 lie on the Chloroplast intermembrane side of the membrane; sequence MGKTSGAKQAT. The chain crosses the membrane as a helical span at residues 12–32; it reads VVVAAMALGWLAIEIAFKPFL. Residues 29–35 carry the AKR2A-binding sequence (ABS) required for chloroplast outer envelope membrane targeting motif; it reads KPFLDKF. Over 33 to 64 the chain is Cytoplasmic; sequence DKFRSSIDKSDPTKDPDDFDTAATATTSKEGL. Residues 39-48 show a composition bias toward basic and acidic residues; that stretch reads IDKSDPTKDP. The interval 39-64 is disordered; the sequence is IDKSDPTKDPDDFDTAATATTSKEGL. Positions 53–64 are enriched in low complexity; it reads TAATATTSKEGL.

As to quaternary structure, interacts with AKR2A. As to expression, confined to green tissues.

The protein resides in the plastid. It is found in the chloroplast outer membrane. This Arabidopsis thaliana (Mouse-ear cress) protein is Outer envelope membrane protein 7.